We begin with the raw amino-acid sequence, 175 residues long: Peptide deformylase (175 aa).

Residues Cys98 and His140 each coordinate Fe cation. Glu141 is an active-site residue. Residue His144 coordinates Fe cation.

This sequence belongs to the polypeptide deformylase family. It depends on Fe(2+) as a cofactor.

It carries out the reaction N-terminal N-formyl-L-methionyl-[peptide] + H2O = N-terminal L-methionyl-[peptide] + formate. In terms of biological role, removes the formyl group from the N-terminal Met of newly synthesized proteins. Requires at least a dipeptide for an efficient rate of reaction. N-terminal L-methionine is a prerequisite for activity but the enzyme has broad specificity at other positions. The protein is Peptide deformylase of Nitrobacter hamburgensis (strain DSM 10229 / NCIMB 13809 / X14).